The sequence spans 286 residues: MLRSGVIAKKVGMTRLFMEDGKQIPVTVLQLDKLQVVAQRTSEKDGYSAVQLGAGTAKAKRTSQAMRGHFAAAKVEPKRKVAEFRVDPENLIGVGEEITANHYFEGQFVDVAGTSIGKGFAGAMKRHNFGGLRASHGVSISHRSHGSTGQCQDPGKVFKGKKMAGHMGAARVTTQNLQVVRTDANRGLIMVKGAVPGSKGGWVTVKDAVKKPFPENAILPAALKSAAEEAEKAAEAAAAAAAAEAEAAAAAAAAEEQAAMEAAEAAEAKTDTVAEAEAAEKKEGDA.

N5-methylglutamine is present on glutamine 152. Low complexity predominate over residues 246–265 (EAAAAAAAAEEQAAMEAAEA). The tract at residues 246–286 (EAAAAAAAAEEQAAMEAAEAAEAKTDTVAEAEAAEKKEGDA) is disordered. Over residues 266–286 (AEAKTDTVAEAEAAEKKEGDA) the composition is skewed to basic and acidic residues.

The protein belongs to the universal ribosomal protein uL3 family. In terms of assembly, part of the 50S ribosomal subunit. Forms a cluster with proteins L14 and L19. Post-translationally, methylated by PrmB.

One of the primary rRNA binding proteins, it binds directly near the 3'-end of the 23S rRNA, where it nucleates assembly of the 50S subunit. This chain is Large ribosomal subunit protein uL3, found in Roseobacter denitrificans (strain ATCC 33942 / OCh 114) (Erythrobacter sp. (strain OCh 114)).